The sequence spans 785 residues: Solute carrier family 45 member 4 (785 aa).

A disordered region spans residues 1-43 (MKMAPQNADSESMQVQELPVPLPDPQKPRDPEAETQEETTSEG). The next 6 membrane-spanning stretches (helical) occupy residues 64–84 (EFCY…IGLP), 87–107 (YYSL…PLIG), 124–144 (ILAL…GSAI), 156–176 (PIGI…ADAT), 197–217 (LNIH…LGGL), and 234–254 (VLFF…LFSI). 2 disordered regions span residues 259-309 (YSPQ…VQSE) and 401-430 (KVPN…SGSM). Phosphoserine occurs at positions 442 and 472. Residues 478-505 (DLQQRQRSRHRNQSGATASSGDTESEEG) form a disordered region. Over residues 490 to 499 (QSGATASSGD) the composition is skewed to low complexity. Ser-502 is modified (phosphoserine). 6 helical membrane passes run 525–545 (LMWL…EAVF), 577–597 (MGCW…ALLQ), 609–629 (IIYM…AMFP), 631–651 (VYVA…ISYC), 683–703 (ILSC…GGVV), and 709–729 (IVVI…TATF). Residues 741–772 (KEEQKGLSSGPAGEGEGGAGSEKPTVLKLSRK) form a disordered region. Ser-749 carries the phosphoserine modification.

This sequence belongs to the glycoside-pentoside-hexuronide (GPH) cation symporter transporter (TC 2.A.2) family. In terms of tissue distribution, ubiquitously expressed.

It localises to the membrane. It carries out the reaction sucrose(out) + H(+)(out) = sucrose(in) + H(+)(in). Proton-associated sucrose transporter. May be able to transport also glucose and fructose. The chain is Solute carrier family 45 member 4 (Slc45a4) from Mus musculus (Mouse).